The following is a 304-amino-acid chain: Putative metal ion transporter ZIPCO (304 aa).

8 helical membrane-spanning segments follow: residues 1–21 (MWLK…VIYL), 46–66 (VASG…VIGL), 74–94 (IYCC…TDIL), 158–178 (FFIV…IGSL), 183–203 (PIII…LMIY), 218–238 (IYAW…VLSF), 243–263 (FVEI…SFNM), and 275–295 (FYIS…MIVF).

Its subcellular location is the cell membrane. Putative transporter for the divalent zinc and iron cations. Required for the development of liver-stage parasites. In Plasmodium berghei (strain Anka), this protein is Putative metal ion transporter ZIPCO.